Here is a 220-residue protein sequence, read N- to C-terminus: Tegument protein UL51 homolog (220 aa).

Residue C11 is the site of S-palmitoyl cysteine; by host attachment.

It belongs to the herpesviridae UL51 family. Oligomerizes. Interacts with UL7 homolog; this interaction mediates UL7 homolog incorporation to virions. Post-translationally, phosphorylated. Palmitoylation is necessary for Golgi localization.

The protein resides in the virion tegument. It localises to the host cytoplasm. The protein localises to the host Golgi apparatus. Its function is as follows. Plays several roles during the time course of infection, including egress of virus particles from the perinuclear space and secondary envelopment of cytoplasmic capsids that bud into specific trans-Golgi network (TGN)-derived membranes. The chain is Tegument protein UL51 homolog (55) from Connochaetes taurinus (Blue wildebeest).